Here is a 1359-residue protein sequence, read N- to C-terminus: Junctional cadherin 5-associated protein (1359 aa).

Disordered stretches follow at residues 1–147 (MYSV…SLPV), 249–411 (PLNE…PAHP), 454–554 (NSSP…TCET), 591–813 (SHLP…CNSK), 840–1076 (KELQ…TIEI), 1105–1141 (RAGQ…PRVS), 1157–1207 (PLFV…KDVE), 1225–1260 (SVAG…DRLM), and 1276–1359 (FRNA…VERV). The span at 15–28 (LSRDPPASREDNPK) shows a compositional bias: basic and acidic residues. Composition is skewed to polar residues over residues 82–91 (PQSTSASRTS) and 98–112 (QPPS…TGND). Positions 120–135 (RQEARSQKPREHENLE) are enriched in basic and acidic residues. Residues 302 to 321 (QQSRGGADSSDSQDSQQMDA) show a composition bias toward low complexity. Over residues 335-353 (LEPPVYVPPPSYRSPPQNI) the composition is skewed to pro residues. Residues 539–554 (RQVSSPYSQGESTCET) show a composition bias toward polar residues. The span at 591–613 (SHLPDRDMDNNDLKPSADQKNGS) shows a compositional bias: basic and acidic residues. Composition is skewed to polar residues over residues 619-632 (LQEQ…STDL), 689-704 (QQTQ…SSQL), and 756-773 (LSPS…SVDQ). Over residues 849-859 (SSSSSSSSSSS) the composition is skewed to low complexity. A compositionally biased stretch (basic and acidic residues) spans 868–880 (QENRAHCRQEDVG). The span at 1003–1013 (PKITSAFSSVK) shows a compositional bias: polar residues. Residues serine 1044 and serine 1050 each carry the phosphoserine modification. Serine 1194 carries the post-translational modification Phosphoserine. Serine 1281 is subject to Phosphoserine. Residues 1324 to 1342 (SISREEKEHPAAQKEKSMD) show a composition bias toward basic and acidic residues.

The protein localises to the cell junction. It is found in the adherens junction. This Homo sapiens (Human) protein is Junctional cadherin 5-associated protein.